Consider the following 235-residue polypeptide: 2-C-methyl-D-erythritol 4-phosphate cytidylyltransferase (235 aa).

Belongs to the IspD/TarI cytidylyltransferase family. IspD subfamily.

The enzyme catalyses 2-C-methyl-D-erythritol 4-phosphate + CTP + H(+) = 4-CDP-2-C-methyl-D-erythritol + diphosphate. The protein operates within isoprenoid biosynthesis; isopentenyl diphosphate biosynthesis via DXP pathway; isopentenyl diphosphate from 1-deoxy-D-xylulose 5-phosphate: step 2/6. Catalyzes the formation of 4-diphosphocytidyl-2-C-methyl-D-erythritol from CTP and 2-C-methyl-D-erythritol 4-phosphate (MEP). In Pseudomonas putida (strain GB-1), this protein is 2-C-methyl-D-erythritol 4-phosphate cytidylyltransferase.